A 164-amino-acid polypeptide reads, in one-letter code: Ion-translocating oxidoreductase complex subunit G (164 aa).

Thr-125 bears the FMN phosphoryl threonine mark.

Belongs to the RnfG family. In terms of assembly, the complex is composed of six subunits: RnfA, RnfB, RnfC, RnfD, RnfE and RnfG. FMN is required as a cofactor.

In terms of biological role, part of a membrane-bound complex that couples electron transfer with translocation of ions across the membrane. This is Ion-translocating oxidoreductase complex subunit G from Buchnera aphidicola subsp. Acyrthosiphon pisum (strain APS) (Acyrthosiphon pisum symbiotic bacterium).